An 86-amino-acid polypeptide reads, in one-letter code: Cell division topological specificity factor (86 aa).

This sequence belongs to the MinE family.

Prevents the cell division inhibition by proteins MinC and MinD at internal division sites while permitting inhibition at polar sites. This ensures cell division at the proper site by restricting the formation of a division septum at the midpoint of the long axis of the cell. The sequence is that of Cell division topological specificity factor from Parasynechococcus marenigrum (strain WH8102).